A 461-amino-acid polypeptide reads, in one-letter code: Bifunctional protein HldE (461 aa).

A ribokinase region spans residues 1-312 (MLEFLSQQKP…IKSFNRVDFE (312 aa)). 191–194 (NKKE) contacts ATP. The active site involves aspartate 259. The interval 334 to 461 (FTNGCFDIVH…KIIEKIKDKK (128 aa)) is cytidylyltransferase.

In the N-terminal section; belongs to the carbohydrate kinase PfkB family. The protein in the C-terminal section; belongs to the cytidylyltransferase family. In terms of assembly, homodimer.

It carries out the reaction D-glycero-beta-D-manno-heptose 7-phosphate + ATP = D-glycero-beta-D-manno-heptose 1,7-bisphosphate + ADP + H(+). It catalyses the reaction D-glycero-beta-D-manno-heptose 1-phosphate + ATP + H(+) = ADP-D-glycero-beta-D-manno-heptose + diphosphate. It participates in nucleotide-sugar biosynthesis; ADP-L-glycero-beta-D-manno-heptose biosynthesis; ADP-L-glycero-beta-D-manno-heptose from D-glycero-beta-D-manno-heptose 7-phosphate: step 1/4. Its pathway is nucleotide-sugar biosynthesis; ADP-L-glycero-beta-D-manno-heptose biosynthesis; ADP-L-glycero-beta-D-manno-heptose from D-glycero-beta-D-manno-heptose 7-phosphate: step 3/4. In terms of biological role, catalyzes the phosphorylation of D-glycero-D-manno-heptose 7-phosphate at the C-1 position to selectively form D-glycero-beta-D-manno-heptose-1,7-bisphosphate. Its function is as follows. Catalyzes the ADP transfer from ATP to D-glycero-beta-D-manno-heptose 1-phosphate, yielding ADP-D-glycero-beta-D-manno-heptose. This is Bifunctional protein HldE from Campylobacter jejuni subsp. doylei (strain ATCC BAA-1458 / RM4099 / 269.97).